We begin with the raw amino-acid sequence, 85 residues long: Small ribosomal subunit protein bS20 (85 aa).

Disordered regions lie at residues 1-25 (MANI…ASIK) and 62-85 (ARKG…QVNA).

The protein belongs to the bacterial ribosomal protein bS20 family.

Binds directly to 16S ribosomal RNA. The chain is Small ribosomal subunit protein bS20 from Bacillus cereus (strain G9842).